The primary structure comprises 418 residues: Tyrosine--tRNA ligase (418 aa).

Tyr34 serves as a coordination point for L-tyrosine. A 'HIGH' region motif is present at residues 39–48 (PTADSLHLGH). Residues Tyr169 and Gln173 each coordinate L-tyrosine. The 'KMSKS' region signature appears at 229–233 (KFGKS). Residue Lys232 participates in ATP binding. The 67-residue stretch at 352-418 (NNIVELLVSS…GKKKYFVLTY (67 aa)) folds into the S4 RNA-binding domain.

The protein belongs to the class-I aminoacyl-tRNA synthetase family. TyrS type 1 subfamily. Homodimer.

It localises to the cytoplasm. The catalysed reaction is tRNA(Tyr) + L-tyrosine + ATP = L-tyrosyl-tRNA(Tyr) + AMP + diphosphate + H(+). Functionally, catalyzes the attachment of tyrosine to tRNA(Tyr) in a two-step reaction: tyrosine is first activated by ATP to form Tyr-AMP and then transferred to the acceptor end of tRNA(Tyr). This is Tyrosine--tRNA ligase from Streptococcus pneumoniae (strain ATCC BAA-255 / R6).